We begin with the raw amino-acid sequence, 348 residues long: 2-heptyl-4(1H)-quinolone synthase subunit PqsC (348 aa).

Cys129 (acyl-thioester intermediate) is an active-site residue. His269 is an active-site residue.

This sequence belongs to the thiolase-like superfamily. FabH family. Forms a tight complex with PqsB.

Its subcellular location is the cytoplasm. It carries out the reaction (2-aminobenzoyl)acetate + octanoyl-CoA + H(+) = 2-heptyl-4(1H)-quinolone + CO2 + CoA + H2O. With respect to regulation, folding of PqsC and binding of octanoate are promoted by PqsB. Binding of the octanoyl group probably increases the binding affinity of the complex for 2-ABA. Activity of the complex is inhibited by 2-aminoacetophenone (2-AA). Its function is as follows. Required for the biosynthesis of the quorum-sensing signaling molecules 2-heptyl-4(1H)-quinolone (HHQ) and 2-heptyl-3-hydroxy-4(1H)-quinolone (Pseudomonas quinolone signal or PQS), which are important for biofilm formation and virulence. The PqsC/PqsB complex catalyzes the condensation of 2-aminobenzoylacetate (2-ABA) and octanoyl-CoA to form HHQ. First, PqsC acquires an octanoyl group from octanoyl-CoA and forms an octanoyl-PqsC intermediate. Then, together with PqsB, it catalyzes the coupling of 2-ABA with the octanoate group, leading to decarboxylation and dehydration, and resulting in closure of the quinoline ring. The chain is 2-heptyl-4(1H)-quinolone synthase subunit PqsC from Pseudomonas aeruginosa (strain ATCC 15692 / DSM 22644 / CIP 104116 / JCM 14847 / LMG 12228 / 1C / PRS 101 / PAO1).